A 182-amino-acid chain; its full sequence is Histone deacetylase complex subunit SAP30L (182 aa).

Residue M1 is modified to N-acetylmethionine. The segment covering M1 to S10 has biased composition (acidic residues). Positions M1–P22 are disordered. Intrachain disulfides connect C28–C29 and C37–C73. The Atypical zinc finger occupies C28–H76. A Glycyl lysine isopeptide (Lys-Gly) (interchain with G-Cter in SUMO2) cross-link involves residue K48. Residues R84 to A103 are disordered. The Nuclear localization signal (NLS) signature appears at N85 to K90. An important for DNA and phosphoinositide binding region spans residues R87–R89. S92 and S98 each carry phosphoserine. Residues K154, K165, and K174 each participate in a glycyl lysine isopeptide (Lys-Gly) (interchain with G-Cter in SUMO2) cross-link.

Belongs to the SAP30 family. In terms of assembly, interacts with components of the histone deacetylase complex SIN3A, HDAC1 and HDAC2. Binds histones and nucleosomes. Interacts with FEZ1.

It is found in the nucleus. The protein localises to the nucleolus. Its function is as follows. Functions as a transcription repressor, probably via its interaction with histone deacetylase complexes. Involved in the functional recruitment of the class 1 Sin3-histone deacetylase complex (HDAC) to the nucleolus. Binds DNA, apparently without sequence-specificity, and bends bound double-stranded DNA. Binds phosphoinositol phosphates (phosphoinositol 3-phosphate, phosphoinositol 4-phosphate and phosphoinositol 5-phosphate) via the same basic sequence motif that mediates DNA binding and nuclear import. The sequence is that of Histone deacetylase complex subunit SAP30L (Sap30l) from Mus musculus (Mouse).